We begin with the raw amino-acid sequence, 72 residues long: UPF0426 protein asl4034 (72 aa).

Belongs to the UPF0426 family.

This is UPF0426 protein asl4034 from Nostoc sp. (strain PCC 7120 / SAG 25.82 / UTEX 2576).